The sequence spans 421 residues: Queuine tRNA-ribosyltransferase accessory subunit 2 (421 aa).

The Zn(2+) site is built by Cys328, Cys330, Cys333, and His359.

This sequence belongs to the queuine tRNA-ribosyltransferase family. QTRT2 subfamily. As to quaternary structure, heterodimer of a catalytic subunit and an accessory subunit. Zn(2+) is required as a cofactor.

It localises to the cytoplasm. Functionally, non-catalytic subunit of the queuine tRNA-ribosyltransferase (TGT) that catalyzes the base-exchange of a guanine (G) residue with queuine (Q) at position 34 (anticodon wobble position) in tRNAs with GU(N) anticodons (tRNA-Asp, -Asn, -His and -Tyr), resulting in the hypermodified nucleoside queuosine (7-(((4,5-cis-dihydroxy-2-cyclopenten-1-yl)amino)methyl)-7-deazaguanosine). In Aedes aegypti (Yellowfever mosquito), this protein is Queuine tRNA-ribosyltransferase accessory subunit 2.